A 406-amino-acid polypeptide reads, in one-letter code: Cysteine desulfurase (406 aa).

The residue at position 226 (Lys-226) is an N6-(pyridoxal phosphate)lysine. Cys-364 (cysteine persulfide intermediate) is an active-site residue.

The protein belongs to the class-V pyridoxal-phosphate-dependent aminotransferase family. Csd subfamily. In terms of assembly, homodimer. Interacts with SufE and the SufBCD complex composed of SufB, SufC and SufD. The interaction with SufE is required to mediate the direct transfer of the sulfur atom from the S-sulfanylcysteine. The cofactor is pyridoxal 5'-phosphate.

It localises to the cytoplasm. The catalysed reaction is (sulfur carrier)-H + L-cysteine = (sulfur carrier)-SH + L-alanine. It carries out the reaction L-selenocysteine + AH2 = hydrogenselenide + L-alanine + A + H(+). The protein operates within cofactor biosynthesis; iron-sulfur cluster biosynthesis. Cysteine desulfurases mobilize the sulfur from L-cysteine to yield L-alanine, an essential step in sulfur metabolism for biosynthesis of a variety of sulfur-containing biomolecules. Component of the suf operon, which is activated and required under specific conditions such as oxidative stress and iron limitation. Acts as a potent selenocysteine lyase in vitro, that mobilizes selenium from L-selenocysteine. Selenocysteine lyase activity is however unsure in vivo. The sequence is that of Cysteine desulfurase from Yersinia pseudotuberculosis serotype IB (strain PB1/+).